The sequence spans 797 residues: Plakophilin-3 (797 aa).

Positions 58–81 (GQQSRHNGSAELDGSAESARGMPR) are disordered. At Arg-81 the chain carries Omega-N-methylarginine. Ser-123, Ser-180, and Ser-183 each carry phosphoserine. Tyr-195 bears the Phosphotyrosine mark. The span at 219–228 (ASSGSSRAGG) shows a compositional bias: low complexity. A disordered region spans residues 219–241 (ASSGSSRAGGLDWPEATEGPPSR). The residue at position 240 (Ser-240) is a Phosphoserine. Thr-250 is subject to Phosphothreonine. Positions 253-274 (RFQSSHRSRGGTGSVSGAGLEP) are disordered. Arg-261 carries the omega-N-methylarginine modification. The tract at residues 283–288 (SLSLSL) is required for interaction with SFN. A phosphoserine mark is found at Ser-285, Ser-313, Ser-314, and Ser-331. The tract at residues 294–724 (LPDVRGLDSY…AEVLVNIIAV (431 aa)) is required for interaction with GSK3B. 8 ARM repeats span residues 305–348 (GHRT…HRCY), 351–390 (AAAK…NLIY), 393–432 (VDNK…NLSS), 449–487 (TDLV…NLSS), 491–536 (ATRQ…NLSY), 596–637 (PKGL…NITA), 645–684 (VLSR…NLSR), and 689–730 (KDEM…NLVV). Residues 516–797 (VGKCEDKSVE…GYRKEDFLGP (282 aa)) form a required for binding to PKP2 mRNA region.

This sequence belongs to the beta-catenin family. Found in a complex composed of CDH1, RAP1A and PKP3; PKP3 acts as a scaffold protein within the complex, the complex is required for CDH1 localization to mature desmosome cell junctions. Interacts with FXR1; the interaction facilitates the binding of PKP3 to PKP2 mRNA. Interacts (via ARM repeats) with GSK3B; the interaction may be involved in PKP3 protein degradation. Interacts with hyperphosphorylated and hypophosphorylated RB1; the interaction inhibits RB1 interaction with and repression of the transcription factor E2F1, potentially via sequestering RB1 to the cytoplasm. Interacts with CDKN1A; the interaction sequesters CDKN1A to the cytoplasm thereby repressing its role as an inhibitor of CDK4- and CDK6-driven RB1 phosphorylation. Interacts (via N-terminus) with SFN; the interaction maintains the cytoplasmic pool of PKP3, facilitates PKP3 exchange at desmosomes and restricts PKP3 localization to existing desmosome cell junctions. Interacts (via N-terminus) with JUP; the interaction is required for PKP3 localization to desmosome cell-cell junctions. Post-translationally, phosphorylated at Ser-285 when localized to the cytoplasm, PKP3 at desmosome cell junctions is not phosphorylated. Phosphorylation at Try-195 by SRC is induced by reactive oxygen species and potentially acts as a release mechanism from desmosome cell-cell junctions. In terms of tissue distribution, expressed in all layers of the epidermis, but is most abundant in the basal layer (at protein level). Expressed in keratinocytes of the epidermis at birth (at protein level). Expressed in the anagen non-keratinized inner root sheath cuticle and hair cuticle (at protein level). Also expressed in the matrix, precursors of the inner root sheath and hair shaft lineages (at protein level). Expressed at apical membranes in the outer hair root sheath and basal layer keratinocytes (at protein level). Expressed in intestinal epithelial cells and lamina propria of the ileum (at protein level). Expressed in keratinocytes (at protein level).

Its subcellular location is the nucleus. The protein resides in the cell junction. It is found in the desmosome. It localises to the cytoplasm. The protein localises to the cell membrane. Its subcellular location is the adherens junction. Functionally, a component of desmosome cell-cell junctions which are required for positive regulation of cellular adhesion. Required for the localization of DSG2, DSP and PKP2 to mature desmosome junctions. May also play a role in the maintenance of DSG3 protein abundance in keratinocytes. Required for the formation of DSP-containing desmosome precursors in the cytoplasm during desmosome assembly. Also regulates the accumulation of CDH1 to mature desmosome junctions, via cAMP-dependent signaling and its interaction with activated RAP1A. Positively regulates the stabilization of PKP2 mRNA and therefore protein abundance, via its interaction with FXR1, may also regulate the protein abundance of DSP via the same mechanism. May also regulate the protein abundance of the desmosome component PKP1. Required for the organization of desmosome junctions at intercellular borders between basal keratinocytes of the epidermis, as a result plays a role in maintenance of the dermal barrier and regulation of the dermal inflammatory response. Required during epidermal keratinocyte differentiation for cell adherence at tricellular cell-cell contacts, via regulation of the timely formation of adherens junctions and desmosomes in a calcium-dependent manner, and may also play a role in the organization of the intracellular actin fiber belt. Acts as a negative regulator of the inflammatory response in hematopoietic cells of the skin and intestine, via modulation of proinflammatory cytokine production. Important for epithelial barrier maintenance in the intestine to reduce intestinal permeability, thereby plays a role in protection from intestinal-derived endotoxemia. Required for the development of hair follicles, via a role in the regulation of inner root sheaf length, correct alignment and anterior-posterior polarity of hair follicles. Promotes proliferation and cell-cycle G1/S phase transition of keratinocytes. Promotes E2F1-driven transcription of G1/S phase promoting genes by acting to release E2F1 from its inhibitory interaction with RB1, via sequestering RB1 and CDKN1A to the cytoplasm and thereby increasing CDK4- and CDK6-driven phosphorylation of RB1. May act as a scaffold protein to facilitate MAPK phosphorylation of RPS6KA protein family members and subsequently promote downstream EGFR signaling. May play a role in the positive regulation of transcription of Wnt-mediated TCF-responsive target genes. The polypeptide is Plakophilin-3 (Pkp3) (Mus musculus (Mouse)).